Here is a 391-residue protein sequence, read N- to C-terminus: F-box only protein 5 (391 aa).

An F-box domain is found at 198–245; that stretch reads AELFHRDFKHLLTKILRHLSAMDLINVISVSTTWRKILQKDNSAYNSY. A ZBR-type zinc finger spans residues 318–366; the sequence is CLKVCVDCSSPAKYDPYLHRATCTRESCKFDFCTLCSCKYHGSKCCQTS. Residues Cys-322, Cys-325, Cys-340, Cys-345, Cys-350, Cys-353, His-358, and Cys-363 each contribute to the Zn(2+) site. The tract at residues 365-391 is disordered; sequence TSKPRSYRVPSEPLPGSKKSKQNLRRL. Residues 382–391 are compositionally biased toward basic residues; the sequence is KKSKQNLRRL.

Part of a SCF (SKP1-cullin-F-box) protein ligase complex. Interacts with btrc. Interacts with skp1. Interacts with cdc20. Interacts with pin1; stabilizes fbxo5 by preventing its association with btrc in an isomerization-dependent pathway; this interaction is present during G2 phase and prevents fbxo5 degradation. Interacts with plk1. In terms of processing, proteolysed; proteolysis is induced by both cyclin B-cdk1 and cyclin A-cdk1/2 complex through probable phosphorylation. Proteolysis is inhibited by pin1 during G2.

It localises to the nucleus. Its subcellular location is the cytoplasm. The protein resides in the cytoskeleton. The protein localises to the spindle. It is found in the microtubule organizing center. It localises to the centrosome. It functions in the pathway protein modification; protein ubiquitination. Regulates progression through early mitosis by inhibiting the anaphase promoting complex/cyclosome (APC). Binds to the APC activators cdc20 to prevent APC activation. Can also bind directly to the APC to inhibit substrate-binding. Required to arrest unfertilized eggs at metaphase of meiosis II, by preventing their release from metaphase of meiosis II, through inhibition of APC-dependent cyclin B destruction leading to stabilization of cyclin B-cdk1 complex activity. The chain is F-box only protein 5 from Xenopus tropicalis (Western clawed frog).